The primary structure comprises 191 residues: Calcium-activated potassium channel subunit beta-1 (191 aa).

Over 2–18 the chain is Cytoplasmic; it reads GKKLVMAQRRGETRALC. The chain crosses the membrane as a helical span at residues 19 to 39; it reads LGVAMVVGAVITYYILGTTVL. Residues 40 to 157 lie on the Extracellular side of the membrane; the sequence is PLYQKSVWTQ…YRRLYGPQSL (118 aa). Residues Asn80 and Asn142 are each glycosylated (N-linked (GlcNAc...) asparagine). Residues 158 to 178 form a helical membrane-spanning segment; sequence LFSLFWPTFLLTGGLLIIVMV. At 179–191 the chain is on the cytoplasmic side; it reads KINQSLSILAAQR.

This sequence belongs to the KCNMB (TC 8.A.14.1) family. KCNMB1 subfamily. In terms of assembly, interacts with KCNMA1 tetramer. There are probably 4 molecules of KCMNB1 per KCNMA1 tetramer. In terms of processing, N-glycosylated.

It localises to the membrane. In terms of biological role, regulatory subunit of the calcium activated potassium KCNMA1 (maxiK) channel. Modulates the calcium sensitivity and gating kinetics of KCNMA1, thereby contributing to KCNMA1 channel diversity. Increases the apparent Ca(2+)/voltage sensitivity of the KCNMA1 channel. It also modifies KCNMA1 channel kinetics and alters its pharmacological properties. It slows down the activation and the deactivation kinetics of the channel. Acts as a negative regulator of smooth muscle contraction by enhancing the calcium sensitivity to KCNMA1. Its presence is also a requirement for internal binding of the KCNMA1 channel opener dehydrosoyasaponin I (DHS-1) triterpene glycoside and for external binding of the agonist hormone 17-beta-estradiol (E2). Increases the binding activity of charybdotoxin (CTX) toxin to KCNMA1 peptide blocker by increasing the CTX association rate and decreasing the dissociation rate. The sequence is that of Calcium-activated potassium channel subunit beta-1 (KCNMB1) from Bos taurus (Bovine).